A 368-amino-acid chain; its full sequence is 2-aminoethylphosphonate--pyruvate transaminase (368 aa).

K192 carries the post-translational modification N6-(pyridoxal phosphate)lysine.

The protein belongs to the class-V pyridoxal-phosphate-dependent aminotransferase family. PhnW subfamily. As to quaternary structure, homodimer. Requires pyridoxal 5'-phosphate as cofactor.

The enzyme catalyses (2-aminoethyl)phosphonate + pyruvate = phosphonoacetaldehyde + L-alanine. In terms of biological role, involved in phosphonate degradation. This is 2-aminoethylphosphonate--pyruvate transaminase from Pseudomonas putida (strain ATCC 700007 / DSM 6899 / JCM 31910 / BCRC 17059 / LMG 24140 / F1).